The chain runs to 133 residues: Alcohol dehydrogenase, 15 kDa subunit (133 aa).

Positions 1–24 (MFRRIVPVLGLALGLGLASQAAMA) are cleaved as a signal peptide. Residues 23–43 (MAQEQSPPPPPAVQGTPGKDF) are disordered. Gln25 carries the pyrrolidone carboxylic acid modification.

The alcohol dehydrogenase multicomponent enzyme system is composed of a dehydrogenase subunit I (AdhA), a cytochrome c subunit II (AdhB) and a subunit III (AdhS).

Its subcellular location is the cell membrane. Its function is as follows. Part of the alcohol dehydrogenase multicomponent enzyme system which is involved in the production of acetic acid and in the ethanol oxidase respiratory chain. Does not play an obligatory role for the alcohol dehydrogenase (ADH) activity. In Gluconobacter oxydans (strain 621H) (Gluconobacter suboxydans), this protein is Alcohol dehydrogenase, 15 kDa subunit.